The sequence spans 1478 residues: Phospholipase B1, membrane-associated (1478 aa).

An N-terminal signal peptide occupies residues 1 to 27 (MELYPGVSPVGLLLLLLLGQGPSQIHG). Residues 28–1422 (SSGENTLAWQ…KAEEPSNALY (1395 aa)) are Extracellular-facing. Tandem repeats lie at residues 43–351 (WTLK…YKNS), 366–711 (MKEG…TKNS), 712–1058 (NLGN…FRNS), and 1068–1407 (IENW…LRNS). The interval 43-1407 (WTLKNFPFPC…RPFLYTLRNS (1365 aa)) is 4 X 308-326 AA approximate repeats. N-linked (GlcNAc...) asparagine glycosylation is present at Asn180. Residues Ser404 and Asp518 contribute to the active site. N-linked (GlcNAc...) asparagine glycosylation is found at Asn525, Asn626, and Asn637. The active site involves His659. Residues Asn715, Asn764, Asn787, Asn801, Asn830, Asn926, Asn1227, Asn1280, Asn1289, and Asn1387 are each glycosylated (N-linked (GlcNAc...) asparagine). The tract at residues 1408 to 1450 (QLLPDKAEEPSNALYWAVPVAAIGGLAVGILGVMLWRTVKPVQ) is necessary for membrane localization. Residues 1423-1443 (WAVPVAAIGGLAVGILGVMLW) traverse the membrane as a helical segment. Residues 1444–1478 (RTVKPVQQEEEEEDTLPNTSVTQDAVSEKRLKAGN) are Cytoplasmic-facing. The segment at 1451–1478 (QEEEEEDTLPNTSVTQDAVSEKRLKAGN) is disordered. Residues 1459–1468 (LPNTSVTQDA) are compositionally biased toward polar residues. Basic and acidic residues predominate over residues 1469–1478 (VSEKRLKAGN).

It belongs to the 'GDSL' lipolytic enzyme family. Phospholipase B1 subfamily. Undergoes proteolytic cleavage in the ileum.

Its subcellular location is the apical cell membrane. The enzyme catalyses a 1,2-diacyl-sn-glycero-3-phosphocholine + H2O = a 1-acyl-sn-glycero-3-phosphocholine + a fatty acid + H(+). It carries out the reaction a 1-O-alkyl-2-acyl-sn-glycero-3-phosphocholine + H2O = a 1-O-alkyl-sn-glycero-3-phosphocholine + a fatty acid + H(+). The catalysed reaction is a 1-acyl-sn-glycero-3-phosphocholine + H2O = sn-glycerol 3-phosphocholine + a fatty acid + H(+). It catalyses the reaction a triacylglycerol + H2O = a diacylglycerol + a fatty acid + H(+). The enzyme catalyses 1,2-dihexadecanoyl-sn-glycero-3-phosphocholine + H2O = 1-hexadecanoyl-sn-glycero-3-phosphocholine + hexadecanoate + H(+). It carries out the reaction 1-hexadecanoyl-2-(9Z-octadecenoyl)-sn-glycero-3-phosphocholine + H2O = 1-hexadecanoyl-sn-glycero-3-phosphocholine + (9Z)-octadecenoate + H(+). The catalysed reaction is 1,2-di-(9Z-octadecenoyl)-sn-glycero-3-phosphocholine + H2O = 1-(9Z-octadecenoyl)-sn-glycero-3-phosphocholine + (9Z)-octadecenoate + H(+). It catalyses the reaction 1-hexadecanoyl-2-(9Z,12Z-octadecadienoyl)-sn-glycero-3-phosphocholine + H2O = (9Z,12Z)-octadecadienoate + 1-hexadecanoyl-sn-glycero-3-phosphocholine + H(+). The enzyme catalyses 1-hexadecanoyl-2-(9Z,12Z-octadecadienoyl)-sn-glycero-3-phosphocholine + H2O = 2-(9Z,12Z-octadecadienoyl)-sn-glycero-3-phosphocholine + hexadecanoate + H(+). It carries out the reaction 1-hexadecanoyl-2-(9Z-octadecenoyl)-sn-glycero-3-phosphoethanolamine + H2O = 1-hexadecanoyl-sn-glycero-3-phosphoethanolamine + (9Z)-octadecenoate + H(+). The catalysed reaction is 1-hexadecanoyl-2-(9Z-octadecenoyl)-sn-glycero-3-phospho-(1'-sn-glycerol) + H2O = 1-hexadecanoyl-sn-glycero-3-phospho-(1'-sn-glycerol) + (9Z)-octadecenoate + H(+). It catalyses the reaction 1,2-dihexadecanoyl-sn-glycero-3-phosphocholine + 2 H2O = sn-glycerol 3-phosphocholine + 2 hexadecanoate + 2 H(+). The enzyme catalyses 1-O-hexadecyl-2-(9Z)-octadecenoyl-sn-glycero-3-phosphocholine + H2O = 1-O-hexadecyl-sn-glycero-3-phosphocholine + (9Z)-octadecenoate + H(+). It carries out the reaction 1-hexadecanoyl-sn-glycero-3-phosphocholine + H2O = sn-glycerol 3-phosphocholine + hexadecanoate + H(+). The catalysed reaction is 1,2,3-tri-(9Z-octadecenoyl)-glycerol + H2O = di-(9Z)-octadecenoylglycerol + (9Z)-octadecenoate + H(+). It catalyses the reaction 1-hexadecanoyl-2-(9Z)-octadecenoyl-3-octadecanoyl-sn-glycerol + H2O = 1-hexadecanoyl-2-(9Z-octadecenoyl)-sn-glycerol + octadecanoate + H(+). The enzyme catalyses 1,3-dihexadecanoyl-2-(9Z-octadecenoyl)glycerol + H2O = 1,3-dihexadecanoylglycerol + (9Z)-octadecenoate + H(+). It carries out the reaction 1,3-dihexadecanoyl-2-(9Z-octadecenoyl)glycerol + H2O = 1-hexadecanoyl-2-(9Z-octadecenoyl)-glycerol + hexadecanoate + H(+). The catalysed reaction is 1-hexadecanoyl-2-(9Z)-octadecenoyl-3-octadecanoyl-sn-glycerol + H2O = 1-hexadecanoyl-3-octadecanoyl-sn-glycerol + (9Z)-octadecenoate + H(+). It catalyses the reaction 1-hexadecanoyl-2-(9Z)-octadecenoyl-3-octadecanoyl-sn-glycerol + H2O = 2-(9Z-octadecenoyl)-3-octadecanoyl-sn-glycerol + hexadecanoate + H(+). The enzyme catalyses 1-octadecanoyl-2-(9Z,12Z)-octadecadienoyl-sn-glycerol + H2O = 1-octadecanoyl-sn-glycerol + (9Z,12Z)-octadecadienoate + H(+). It carries out the reaction 1,2-di-(9Z-octadecenoyl)-sn-glycerol + H2O = 1-(9Z-octadecenoyl)-sn-glycerol + (9Z)-octadecenoate + H(+). The catalysed reaction is 2,3-di-(9Z)-octadecenoyl-sn-glycerol + H2O = 3-(9Z-octadecenoyl)-sn-glycerol + (9Z)-octadecenoate + H(+). It catalyses the reaction 1,3-di-(9Z-octadecenoyl)-glycerol + H2O = 1-(9Z-octadecenoyl)-glycerol + (9Z)-octadecenoate + H(+). The enzyme catalyses 1-(9Z-octadecenoyl)-glycerol + H2O = glycerol + (9Z)-octadecenoate + H(+). It carries out the reaction 2-(9Z-octadecenoyl)-glycerol + H2O = glycerol + (9Z)-octadecenoate + H(+). Functionally, calcium-independent membrane-associated phospholipase that catalyzes complete diacylation of phospholipids by hydrolyzing both sn-1 and sn-2 fatty acyl chains attached to the glycerol backbone (phospholipase B activity). Has dual phospholipase and lysophospholipase activities toward diacylphospholipids. Preferentially cleaves sn-2 ester bonds over sn-1 bonds. Acts as a lipase toward glycerolipid substrates. Hydrolyzes fatty acyl chains of diacylglycerols with preference for the sn-2 position and of triacylglycerols with not positional selectivity. May also hydrolyze long chain retinyl esters such as retinyl palmitate. May contribute to digestion of dietary phospholipids, glycerolipids and retinoids, facilitating lipid absorption at the brush border. The polypeptide is Phospholipase B1, membrane-associated (Plb1) (Mus musculus (Mouse)).